Consider the following 341-residue polypeptide: Biotin synthase (341 aa).

The region spanning 40–264 is the Radical SAM core domain; the sequence is NSVKLNYLVN…VAPRSELRIA (225 aa). [4Fe-4S] cluster contacts are provided by cysteine 55, cysteine 59, and cysteine 62. The [2Fe-2S] cluster site is built by cysteine 99, cysteine 132, cysteine 192, and arginine 262. Residues 317 to 341 form a disordered region; that stretch reads ASAPQGGVEPVLRKRGAGTELQPNA.

This sequence belongs to the radical SAM superfamily. Biotin synthase family. In terms of assembly, homodimer. The cofactor is [4Fe-4S] cluster. It depends on [2Fe-2S] cluster as a cofactor.

It carries out the reaction (4R,5S)-dethiobiotin + (sulfur carrier)-SH + 2 reduced [2Fe-2S]-[ferredoxin] + 2 S-adenosyl-L-methionine = (sulfur carrier)-H + biotin + 2 5'-deoxyadenosine + 2 L-methionine + 2 oxidized [2Fe-2S]-[ferredoxin]. It functions in the pathway cofactor biosynthesis; biotin biosynthesis; biotin from 7,8-diaminononanoate: step 2/2. Functionally, catalyzes the conversion of dethiobiotin (DTB) to biotin by the insertion of a sulfur atom into dethiobiotin via a radical-based mechanism. This is Biotin synthase from Renibacterium salmoninarum (strain ATCC 33209 / DSM 20767 / JCM 11484 / NBRC 15589 / NCIMB 2235).